The sequence spans 595 residues: ATPase family AAA domain-containing protein 3 (595 aa).

The interval 1 to 48 (MSWLFGVQKNATPQIPDDFQAGAAPGGPQQPGQGQRQEGNSKMAYSFD) is disordered. The Mitochondrial intermembrane segment spans residues 1–243 (MSWLFGVQKN…LNQFLNDKTK (243 aa)). The segment covering 20–35 (QAGAAPGGPQQPGQGQ) has biased composition (low complexity). Coiled coils occupy residues 80–107 (VTRQ…HIRV) and 140–175 (EELA…EHEL). Residues 244–260 (IAAAVGGLTALAVGWYT) traverse the membrane as a helical segment. The Mitochondrial matrix segment spans residues 261 to 595 (AKRGTGVTAR…GTTLKRETAV (335 aa)). 349–356 (GPPGTGKT) contacts ATP. A PDZ-binding motif is present at residues 592 to 595 (ETAV).

Belongs to the AAA ATPase family.

The protein resides in the mitochondrion inner membrane. The protein localises to the mitochondrion matrix. Its subcellular location is the mitochondrion nucleoid. Its function is as follows. Essential for mitochondrial network organization, mitochondrial metabolism and cell growth at organism and cellular level. Important during development for the up-regulation of mitochondrial activity during the transition to higher larval stages. Regulates mitochondrial iron homeostasis. May play an important role in mitochondrial protein synthesis. May also participate in mitochondrial DNA replication. May bind to mitochondrial DNA D-loops and contribute to nucleoid stability. Plays a role in regulating the production of reactive oxygen species in response to heat stress. The protein is ATPase family AAA domain-containing protein 3 of Caenorhabditis elegans.